The following is a 621-amino-acid chain: Bifunctional 3'-phosphoadenosine 5'-phosphosulfate synthase 2 (621 aa).

The tract at residues Met-1 to Ile-216 is adenylyl-sulfate kinase. Gly-53 to Thr-58 contributes to the ATP binding site. Adenosine 5'-phosphosulfate-binding positions include Asp-80–Arg-83, Phe-92, Arg-97–Asn-100, Ile-123–Ser-124, Lys-162, and Gly-175–Phe-176. ATP contacts are provided by residues Ser-198, Gln-415–Asn-418, Gly-517–Ala-521, and Ala-559. Positions Ile-225–Asn-621 are sulfate adenylyltransferase.

This sequence in the N-terminal section; belongs to the APS kinase family. The protein in the C-terminal section; belongs to the sulfate adenylyltransferase family. As to expression, expressed in liver, cartilage, skin and brain.

It carries out the reaction sulfate + ATP + H(+) = adenosine 5'-phosphosulfate + diphosphate. It catalyses the reaction adenosine 5'-phosphosulfate + ATP = 3'-phosphoadenylyl sulfate + ADP + H(+). Its pathway is sulfur metabolism; sulfate assimilation. Bifunctional enzyme with both ATP sulfurylase and APS kinase activity, which mediates two steps in the sulfate activation pathway. The first step is the transfer of a sulfate group to ATP to yield adenosine 5'-phosphosulfate (APS), and the second step is the transfer of a phosphate group from ATP to APS yielding 3'-phosphoadenylylsulfate/PAPS, the activated sulfate donor used by sulfotransferases. In mammals, PAPS is the sole source of sulfate while APS appears to only be an intermediate in the sulfate-activation pathway. May have an important role in skeletogenesis during postnatal growth. This Mus musculus (Mouse) protein is Bifunctional 3'-phosphoadenosine 5'-phosphosulfate synthase 2 (Papss2).